We begin with the raw amino-acid sequence, 281 residues long: Very long chain fatty acid elongase 7 (281 aa).

Ala2 bears the N-acetylalanine mark. At 2–27 (AFSDLTSRTVRLYDNWIKDADPRVED) the chain is on the lumenal side. The helical transmembrane segment at 28-48 (WLLMSSPLPQTIILGFYVYFV) threads the bilayer. Topologically, residues 49-66 (TSLGPKLMENRKPFELKK) are cytoplasmic. Residues 67-87 (VMITYNFSIVLFSVYMFYEFI) traverse the membrane as a helical segment. Residues 88 to 115 (MSGWGTGYSFRCDIVDYSQSPTALRMVR) are Lumenal-facing. A disulfide bridge links Cys99 with Cys231. The chain crosses the membrane as a helical span at residues 116–136 (TCWLYYFSKFIELLDTIFFIL). 3-oxoeicosanoyl-CoA-binding residues include Lys124, Arg137, Lys139, Gln142, and His147. Topologically, residues 137-142 (RKKNSQ) are cytoplasmic. A helical transmembrane segment spans residues 143-162 (VTFLHVFHHTIMPWTWWFGV). The HxxHH motif motif lies at 147–151 (HVFHH). Catalysis depends on His150, which acts as the Nucleophile. Over 163-171 (KFAAGGLGT) the chain is Lumenal. Residues 172–194 (FHAFLNTAVHVVMYSYYGLCALG) form a helical membrane-spanning segment. 3-oxoeicosanoyl-CoA contacts are provided by Tyr187, Lys204, Thr208, and Gln211. Over 195-206 (PDYQKYLWWKKY) the chain is Cytoplasmic. A helical transmembrane segment spans residues 207-227 (LTSLQLIQFVLITIHISQFFF). The Lumenal portion of the chain corresponds to 228–236 (MEDCKYQFP). Residues 237 to 257 (VFQYIIMSYGCIFLLLFLHFW) form a helical membrane-spanning segment. Topologically, residues 258–281 (YRAYTKGQRLPKTVKHGICKNKDH) are cytoplasmic. Arg266 lines the 3-oxoeicosanoyl-CoA pocket. Residues 277–281 (KNKDH) carry the Di-lysine motif motif.

The protein belongs to the ELO family. ELOVL7 subfamily. As to quaternary structure, homodimer. Interacts with TECR.

It localises to the endoplasmic reticulum membrane. The enzyme catalyses a very-long-chain acyl-CoA + malonyl-CoA + H(+) = a very-long-chain 3-oxoacyl-CoA + CO2 + CoA. The catalysed reaction is eicosanoyl-CoA + malonyl-CoA + H(+) = 3-oxodocosanoyl-CoA + CO2 + CoA. It catalyses the reaction (5Z,8Z,11Z,14Z)-eicosatetraenoyl-CoA + malonyl-CoA + H(+) = (7Z,10Z,13Z,16Z)-3-oxodocosatetraenoyl-CoA + CO2 + CoA. It carries out the reaction (6Z,9Z,12Z)-octadecatrienoyl-CoA + malonyl-CoA + H(+) = (8Z,11Z,14Z)-3-oxoeicosatrienoyl-CoA + CO2 + CoA. The enzyme catalyses (9Z,12Z)-octadecadienoyl-CoA + malonyl-CoA + H(+) = (11Z,14Z)-3-oxoicosa-11,14-dienoyl-CoA + CO2 + CoA. The catalysed reaction is (9Z)-octadecenoyl-CoA + malonyl-CoA + H(+) = 3-oxo-(11Z)-eicosenoyl-CoA + CO2 + CoA. It catalyses the reaction octadecanoyl-CoA + malonyl-CoA + H(+) = 3-oxoeicosanoyl-CoA + CO2 + CoA. It carries out the reaction hexadecanoyl-CoA + malonyl-CoA + H(+) = 3-oxooctadecanoyl-CoA + CO2 + CoA. The enzyme catalyses (9Z,12Z,15Z)-octadecatrienoyl-CoA + malonyl-CoA + H(+) = (11Z,14Z,17Z)-3-oxoeicosatrienoyl-CoA + CO2 + CoA. It participates in lipid metabolism; fatty acid biosynthesis. In terms of biological role, catalyzes the first and rate-limiting reaction of the four reactions that constitute the long-chain fatty acids elongation cycle. This endoplasmic reticulum-bound enzymatic process allows the addition of 2 carbons to the chain of long- and very long-chain fatty acids (VLCFAs) per cycle. Condensing enzyme with higher activity toward C18 acyl-CoAs, especially C18:3(n-3) acyl-CoAs and C18:3(n-6)-CoAs. Also active toward C20:4-, C18:0-, C18:1-, C18:2- and C16:0-CoAs, and weakly toward C20:0-CoA. Little or no activity toward C22:0-, C24:0-, or C26:0-CoAs. May participate in the production of saturated and polyunsaturated VLCFAs of different chain lengths that are involved in multiple biological processes as precursors of membrane lipids and lipid mediators. The polypeptide is Very long chain fatty acid elongase 7 (Bos taurus (Bovine)).